The following is a 588-amino-acid chain: MSRVKILDEETISHIAAGEVVERAASVVKELVENAVDADAQIIRIGISADKTGITKISVTDDGIGMDFDDALLAFRQHATSKISRPEDLDGITTLGFRGEALASIAAISKVTFTTKERGSPSPEAARVVIHGGELISHSAVGAPEGTSVLIDALFYNTPARRKFQKSVPTELSHVYDMVERIALSNRNISFVLLYNGKERFQTFGTGSYPDVIAAVFGSTFSKELTPVSGSFGPVKIDGWITRPGSEMKTTQTRFYLSINGRQVTSRQLQWAIREGYGTLLPKGMYPAAFLDIVLDPRDVDVNVHPTKREVRLSREREVMRCVQDAVYTSLHEERVFSTAPMPTLARETITTLPVEIVGEPVPVYAGKQEMHEARQAPLKQTEKQLRRTESADLPETDLFVPEVLGQIGDTYILAKNESGDLIVVDQHAAHERIMYDQLLARSSSAEAGQELIVPQPITLSKKETAALPDLLDVLAAAGYLLEPFGKDVWMVRSVPVVSSTLGDPDTIHAILDAALDGVGNTDEVLDRVLKTAACRAVVKGNTPLTIEQMQRLLRQLMATKSPYTCPHGRPTTIVLSKSRLAGMFLRT.

The protein belongs to the DNA mismatch repair MutL/HexB family.

In terms of biological role, this protein is involved in the repair of mismatches in DNA. It is required for dam-dependent methyl-directed DNA mismatch repair. May act as a 'molecular matchmaker', a protein that promotes the formation of a stable complex between two or more DNA-binding proteins in an ATP-dependent manner without itself being part of a final effector complex. This Methanocorpusculum labreanum (strain ATCC 43576 / DSM 4855 / Z) protein is DNA mismatch repair protein MutL.